The chain runs to 292 residues: Cbb3-type cytochrome c oxidase subunit CcoP (292 aa).

2 consecutive transmembrane segments (helical) span residues 11 to 31 and 62 to 82; these read FGLI…SSLI and VGWI…FFFG. 2 Cytochrome c domains span residues 116–195 and 205–288; these read ELVD…MAEI and QLID…QSLK. Heme c is bound by residues cysteine 129, cysteine 132, histidine 133, methionine 174, cysteine 219, cysteine 222, histidine 223, and methionine 264.

It belongs to the CcoP / FixP family. In terms of assembly, component of the cbb3-type cytochrome c oxidase at least composed of CcoN, CcoO, CcoQ and CcoP. Heme c is required as a cofactor.

It localises to the cell inner membrane. The protein operates within energy metabolism; oxidative phosphorylation. Its function is as follows. C-type cytochrome. Part of the cbb3-type cytochrome c oxidase complex. CcoP subunit is required for transferring electrons from donor cytochrome c via its heme groups to CcoO subunit. From there, electrons are shuttled to the catalytic binuclear center of CcoN subunit where oxygen reduction takes place. The complex also functions as a proton pump. The polypeptide is Cbb3-type cytochrome c oxidase subunit CcoP (Helicobacter pylori (Campylobacter pylori)).